A 1235-amino-acid polypeptide reads, in one-letter code: DNA polymerase (1235 aa).

A DOD-type homing endonuclease domain is found at 773 to 887 (LLGYYISSGD…LILLLNSIGV (115 aa)).

The protein belongs to the DNA polymerase type-B family. In terms of processing, this protein undergoes a protein self splicing that involves a post-translational excision of the intervening region (intein) followed by peptide ligation.

The enzyme catalyses DNA(n) + a 2'-deoxyribonucleoside 5'-triphosphate = DNA(n+1) + diphosphate. The sequence is that of DNA polymerase (pol) from Pyrococcus horikoshii (strain ATCC 700860 / DSM 12428 / JCM 9974 / NBRC 100139 / OT-3).